Here is a 994-residue protein sequence, read N- to C-terminus: NACHT, LRR and PYD domains-containing protein 4 (994 aa).

The Pyrin domain occupies 1–94 (MAASFFSDFG…CMKVMRERTG (94 aa)). The region spanning 149–472 (RTVIIQGPQG…FYLLKSHLDH (324 aa)) is the NACHT domain. 155-162 (GPQGIGKT) contacts ATP. LRR repeat units lie at residues 637 to 660 (SGHLRELQVQDSTLSESTFVTWCN), 698 to 721 (YLSFTLTKLSRDDIRSLCDALNYP), 722 to 745 (AGNVKELALVNCHLSPIDCEVLAG), 750 to 777 (NKKLTYLNVSCNQLDTGVPLLCEALCSP), 806 to 833 (NKSVRYLDLSANVLKDEGLKTLCEALKH), 863 to 886 (NQNLKILQIGCNEIGDVGVQLLCR), 920 to 943 (SKTLQQLNLTLNTLDHTGVVVLCE), and 949 to 972 (ECALQVLGLRKTDFDEETQALLTA).

Belongs to the NLRP family. In terms of assembly, interacts with CHUK/IKKA, inhibiting its kinase activity.

Functionally, may be involved in inflammation and recognition of cytosolic pathogen-associated molecular patterns (PAMPs) not intercepted by membrane-bound receptors. Acts as a negative regulator of the type I interferon signaling pathway by serving as an adapter to promote DTX4-mediated ubiquitination of activated TBK1, and its subsequent degradation. Suppresses NF-kappaB induction by the cytokines TNFA and IL1B, suggesting that it operates at a point of convergence in these two cytokine signaling pathways. The polypeptide is NACHT, LRR and PYD domains-containing protein 4 (Homo sapiens (Human)).